Consider the following 95-residue polypeptide: Protein TusB (95 aa).

The protein belongs to the DsrH/TusB family. Heterohexamer, formed by a dimer of trimers. The hexameric TusBCD complex contains 2 copies each of TusB, TusC and TusD. The TusBCD complex interacts with TusE.

It is found in the cytoplasm. In terms of biological role, part of a sulfur-relay system required for 2-thiolation of 5-methylaminomethyl-2-thiouridine (mnm(5)s(2)U) at tRNA wobble positions. This Escherichia coli O45:K1 (strain S88 / ExPEC) protein is Protein TusB.